The sequence spans 330 residues: Pantothenate kinase (330 aa).

108 to 115 (GSVAVGKS) contributes to the ATP binding site.

Belongs to the prokaryotic pantothenate kinase family.

Its subcellular location is the cytoplasm. It catalyses the reaction (R)-pantothenate + ATP = (R)-4'-phosphopantothenate + ADP + H(+). It functions in the pathway cofactor biosynthesis; coenzyme A biosynthesis; CoA from (R)-pantothenate: step 1/5. This Allorhizobium ampelinum (strain ATCC BAA-846 / DSM 112012 / S4) (Agrobacterium vitis (strain S4)) protein is Pantothenate kinase.